The sequence spans 246 residues: Cold-regulated protein 27 (246 aa).

Disordered stretches follow at residues 1-39 (MVGD…MYSA) and 151-232 (EPEN…VVPL). Residues 168–180 (SSGSASSLKQLSS) show a composition bias toward low complexity.

Its subcellular location is the nucleus. In terms of biological role, together with COR28, involved in central circadian clock regulation and in flowering promotion, by binding to the chromatin of clock-associated evening genes TOC1, PRR5, ELF4 and cold-responsive genes in order to repress their transcription. Negative regulator of freezing tolerance. In Arabidopsis thaliana (Mouse-ear cress), this protein is Cold-regulated protein 27.